Reading from the N-terminus, the 491-residue chain is 2,3-bisphosphoglycerate-independent phosphoglycerate mutase (491 aa).

Mn(2+) contacts are provided by aspartate 11 and serine 61. Residue serine 61 is the Phosphoserine intermediate of the active site. Residues histidine 118, 147-148 (RD), arginine 177, arginine 183, 248-251 (RSDR), and lysine 320 contribute to the substrate site. Mn(2+) is bound by residues aspartate 386, histidine 390, aspartate 427, histidine 428, and histidine 445.

The protein belongs to the BPG-independent phosphoglycerate mutase family. In terms of assembly, monomer. Mn(2+) is required as a cofactor.

It carries out the reaction (2R)-2-phosphoglycerate = (2R)-3-phosphoglycerate. It functions in the pathway carbohydrate degradation; glycolysis; pyruvate from D-glyceraldehyde 3-phosphate: step 3/5. Functionally, catalyzes the interconversion of 2-phosphoglycerate and 3-phosphoglycerate. This Sulfurimonas denitrificans (strain ATCC 33889 / DSM 1251) (Thiomicrospira denitrificans (strain ATCC 33889 / DSM 1251)) protein is 2,3-bisphosphoglycerate-independent phosphoglycerate mutase.